Here is a 151-residue protein sequence, read N- to C-terminus: 3-hydroxyacyl-[acyl-carrier-protein] dehydratase FabZ (151 aa).

The active site involves His-54.

This sequence belongs to the thioester dehydratase family. FabZ subfamily.

It is found in the cytoplasm. It catalyses the reaction a (3R)-hydroxyacyl-[ACP] = a (2E)-enoyl-[ACP] + H2O. Functionally, involved in unsaturated fatty acids biosynthesis. Catalyzes the dehydration of short chain beta-hydroxyacyl-ACPs and long chain saturated and unsaturated beta-hydroxyacyl-ACPs. The protein is 3-hydroxyacyl-[acyl-carrier-protein] dehydratase FabZ of Sodalis glossinidius (strain morsitans).